Reading from the N-terminus, the 307-residue chain is Oxygen-dependent coproporphyrinogen-III oxidase (307 aa).

S99 contributes to the substrate binding site. A divalent metal cation-binding residues include H103 and H113. Catalysis depends on H113, which acts as the Proton donor. 115-117 contacts substrate; that stretch reads NVR. Residues H152 and H182 each coordinate a divalent metal cation. Residues 247–282 form an important for dimerization region; that stretch reads YVEFNLVFDRGTLFGLQSGGRTESILLSMPPTAGWR. Residue 265–267 participates in substrate binding; the sequence is GGR.

Belongs to the aerobic coproporphyrinogen-III oxidase family. Homodimer. The cofactor is a divalent metal cation.

Its subcellular location is the cytoplasm. It carries out the reaction coproporphyrinogen III + O2 + 2 H(+) = protoporphyrinogen IX + 2 CO2 + 2 H2O. It functions in the pathway porphyrin-containing compound metabolism; protoporphyrin-IX biosynthesis; protoporphyrinogen-IX from coproporphyrinogen-III (O2 route): step 1/1. Functionally, involved in the heme biosynthesis. Catalyzes the aerobic oxidative decarboxylation of propionate groups of rings A and B of coproporphyrinogen-III to yield the vinyl groups in protoporphyrinogen-IX. The polypeptide is Oxygen-dependent coproporphyrinogen-III oxidase (Burkholderia mallei (strain SAVP1)).